We begin with the raw amino-acid sequence, 172 residues long: MIDSDGFRANVGIIICNRFGQVMWARRFGQHSWQFPQGGVDEGETPEEAMFRELYEEVGLRPEHVQILTSTRSWLRYRLPKRLIRQDSKPVCIGQKQKWFLLQLKSNESAIDLNACGHPEFDDWRWVSYWYPVRQVVSFKRDVYRKVMKEFAPTALPFQTREHHHSRRGRRR.

Residues 6–149 (GFRANVGIII…KRDVYRKVMK (144 aa)) form the Nudix hydrolase domain. The short motif at 38-59 (GGVDEGETPEEAMFRELYEEVG) is the Nudix box element.

It belongs to the Nudix hydrolase family. RppH subfamily. A divalent metal cation serves as cofactor.

Its function is as follows. Accelerates the degradation of transcripts by removing pyrophosphate from the 5'-end of triphosphorylated RNA, leading to a more labile monophosphorylated state that can stimulate subsequent ribonuclease cleavage. The polypeptide is RNA pyrophosphohydrolase (Shewanella sediminis (strain HAW-EB3)).